The following is a 239-amino-acid chain: Putative ABC transporter ATP-binding protein BR1368/BS1330_I1363 (239 aa).

The ABC transporter domain maps to 5 to 234 (LSLDRVSVSR…EQVHLHYVEA (230 aa)). An ATP-binding site is contributed by 37-44 (GDNGVGKT).

This sequence belongs to the ABC transporter superfamily.

Its subcellular location is the cell inner membrane. In terms of biological role, probably part of an ABC transporter complex. Responsible for energy coupling to the transport system. The polypeptide is Putative ABC transporter ATP-binding protein BR1368/BS1330_I1363 (Brucella suis biovar 1 (strain 1330)).